We begin with the raw amino-acid sequence, 665 residues long: Pentatricopeptide repeat-containing protein At3g02490, mitochondrial (665 aa).

The transit peptide at 1-37 (MRYQWRSLLFRSYRSSPRPFLSHHSRFQVISNSTRSF) directs the protein to the mitochondrion. 8 PPR repeats span residues 280-314 (DEKT…GYEM), 315-349 (EMET…SISN), 352-388 (TPHC…GNVV), 389-423 (PDVM…GYVP), 424-458 (SGDL…GNHL), 459-493 (DDKA…EGVS), 495-530 (AGYA…QLKP), and 536-570 (KIMV…GFPP).

It belongs to the PPR family. P subfamily.

It is found in the mitochondrion. This is Pentatricopeptide repeat-containing protein At3g02490, mitochondrial from Arabidopsis thaliana (Mouse-ear cress).